Reading from the N-terminus, the 186-residue chain is Der GTPase-activating protein YihI (186 aa).

A disordered region spans residues 42 to 77; it reads KAREDKKKRKHKGLASGSRHSAVEEKANKLQNEIKD. Positions 62–77 are enriched in basic and acidic residues; it reads SAVEEKANKLQNEIKD.

Belongs to the YihI family. As to quaternary structure, interacts with Der.

Functionally, a GTPase-activating protein (GAP) that modifies Der/EngA GTPase function. May play a role in ribosome biogenesis. This is Der GTPase-activating protein YihI from Haemophilus influenzae (strain ATCC 51907 / DSM 11121 / KW20 / Rd).